Reading from the N-terminus, the 500-residue chain is Putative antiporter subunit mnhD2 (500 aa).

Transmembrane regions (helical) follow at residues 2-22 (MSNLIILPMLLPFVCALILVF), 32-52 (ILSITTMIVNTMISIALLIYV), 78-98 (LSLLMVSVSSFVVTLIMAYGF), 108-128 (FHLPTFILLLTVGVIGSFLTS), 130-150 (LFNLYVMFEIMLLASFVLVTL), 161-181 (IVYVVLNILGSWLLLLGIGML), 209-229 (ISLVFLVAFSSKAALVIFMWL), 240-260 (LAALFAALMTKVGAYALIRFF), 273-293 (TLLVFMACITMIIGAFGVIAY), 308-328 (IGFIILGLGSHTISGVNGAIF), 330-350 (LANDIIVKTLLFFVIGSLVYM), 368-388 (FFGVAFVVVIFAIGGVPPFSG), 403-423 (GNYIGLALMIVTSLIAMYSLF), and 450-470 (GLLSVLVVVVLAMGIAAPVVL).

Belongs to the CPA3 antiporters (TC 2.A.63) subunit D family. May form a heterooligomeric complex that consists of seven subunits: mnhA2, mnhB2, mnhC2, mnhD2, mnhE2, mnhF2 and mnhG2.

Its subcellular location is the cell membrane. The protein is Putative antiporter subunit mnhD2 (mnhD2) of Staphylococcus epidermidis (strain ATCC 12228 / FDA PCI 1200).